A 1099-amino-acid polypeptide reads, in one-letter code: 1-phosphatidylinositol 4,5-bisphosphate phosphodiesterase 1 (1099 aa).

The segment covering 1–10 has biased composition (basic and acidic residues); it reads MLESLNRRNS. Disordered regions lie at residues 1-109 and 128-164; these read MLES…SSTT and ESRSIVSNNGGSPMSDSTTVTSTLSTDTAPKRGKSIQ. Low complexity-rich tracts occupy residues 43 to 66 and 86 to 109; these read PPKSQLLLRKSSSPSSYSPIKSDL and PKQQSSLSSSSSSSSSSNTKSSTT. Positions 131 to 141 are enriched in polar residues; the sequence is SIVSNNGGSPM. Over residues 142–155 the composition is skewed to low complexity; that stretch reads SDSTTVTSTLSTDT. Residues 566–726 enclose the PI-PLC X-box domain; that stretch reads YDYPLNEYFI…LKHKFIIKVK (161 aa). Active-site residues include His579 and His642. The substrate site is built by Lys724 and Lys726. The disordered stretch occupies residues 742 to 780; that stretch reads FTTSTTTTTTTTTTTTTATSLSEDNENNKSNSSSTSSFI. A compositionally biased stretch (low complexity) spans 743–778; that stretch reads TTSTTTTTTTTTTTTTATSLSEDNENNKSNSSSTSS. Positions 794–912 constitute a PI-PLC Y-box domain; sequence ELSNLGIYTQ…GYVLKPSVLR (119 aa). 2 residues coordinate substrate: Ser823 and Arg852. One can recognise a C2 domain in the interval 917 to 1071; that stretch reads KSSSSNVDTR…QGYRYIYLND (155 aa).

The catalysed reaction is a 1,2-diacyl-sn-glycero-3-phospho-(1D-myo-inositol-4,5-bisphosphate) + H2O = 1D-myo-inositol 1,4,5-trisphosphate + a 1,2-diacyl-sn-glycerol + H(+). The production of the second messenger molecules diacylglycerol (DAG) and inositol 1,4,5-trisphosphate (IP3) is mediated by activated phosphatidylinositol-specific phospholipase C enzymes. This chain is 1-phosphatidylinositol 4,5-bisphosphate phosphodiesterase 1 (PLC1), found in Candida albicans (Yeast).